We begin with the raw amino-acid sequence, 256 residues long: Acetyl-coenzyme A carboxylase carboxyl transferase subunit alpha (256 aa).

The 236-residue stretch at 1–236 (MSDVARILKE…KTAIVDELAE (236 aa)) folds into the CoA carboxyltransferase C-terminal domain.

Belongs to the AccA family. As to quaternary structure, acetyl-CoA carboxylase is a heterohexamer composed of biotin carboxyl carrier protein (AccB), biotin carboxylase (AccC) and two subunits each of ACCase subunit alpha (AccA) and ACCase subunit beta (AccD).

It is found in the cytoplasm. The catalysed reaction is N(6)-carboxybiotinyl-L-lysyl-[protein] + acetyl-CoA = N(6)-biotinyl-L-lysyl-[protein] + malonyl-CoA. It functions in the pathway lipid metabolism; malonyl-CoA biosynthesis; malonyl-CoA from acetyl-CoA: step 1/1. Its function is as follows. Component of the acetyl coenzyme A carboxylase (ACC) complex. First, biotin carboxylase catalyzes the carboxylation of biotin on its carrier protein (BCCP) and then the CO(2) group is transferred by the carboxyltransferase to acetyl-CoA to form malonyl-CoA. The polypeptide is Acetyl-coenzyme A carboxylase carboxyl transferase subunit alpha (Streptococcus thermophilus (strain CNRZ 1066)).